Consider the following 444-residue polypeptide: ATP-dependent protease ATPase subunit HslU (444 aa).

ATP contacts are provided by residues Ile-18, 60-65 (GVGKTE), Asp-256, Glu-322, and Arg-394.

This sequence belongs to the ClpX chaperone family. HslU subfamily. As to quaternary structure, a double ring-shaped homohexamer of HslV is capped on each side by a ring-shaped HslU homohexamer. The assembly of the HslU/HslV complex is dependent on binding of ATP.

Its subcellular location is the cytoplasm. In terms of biological role, ATPase subunit of a proteasome-like degradation complex; this subunit has chaperone activity. The binding of ATP and its subsequent hydrolysis by HslU are essential for unfolding of protein substrates subsequently hydrolyzed by HslV. HslU recognizes the N-terminal part of its protein substrates and unfolds these before they are guided to HslV for hydrolysis. The sequence is that of ATP-dependent protease ATPase subunit HslU from Klebsiella pneumoniae subsp. pneumoniae (strain ATCC 700721 / MGH 78578).